The sequence spans 1372 residues: Polysaccharide lyase 8 family protein HylA (1372 aa).

The N-terminal stretch at 1 to 25 is a signal peptide; sequence MIKKIIVVVAFMLTGFSLTAMSASA. Residues 63–172 form the F5/8 type C domain; sequence DGDETTRWSA…SIISFEAYEK (110 aa). The BIG2 domain occupies 183–242; sequence TENLTISEKRKQQLAFEVSPAGVDITEDQIEWSSSDPTIVTVDQTGNLTAVKSGEAKVTV. Residues histidine 487, tyrosine 496, and arginine 550 contribute to the active site. FIVAR domains are found at residues 1014–1075, 1084–1146, 1155–1217, and 1226–1288; these read KEAL…VKQL, DKTN…VKQL, and DKTN…VKRL. Residues 1288-1336 form a disordered region; the sequence is LTLKNSGENKKEQKNGGNNGHLNTSTGVDQTGTKQVKPSSQGGFRKASQ. The segment covering 1308–1329 has biased composition (polar residues); the sequence is HLNTSTGVDQTGTKQVKPSSQG. The LPXTG sorting signal motif lies at 1338-1342; sequence LPSTG. A Pentaglycyl murein peptidoglycan amidated threonine modification is found at threonine 1341. Positions 1342–1372 are cleaved as a propeptide — removed by sortase; it reads GEKKSIALVIIGLLVIASGCLLVFRKSKSKK.

Belongs to the polysaccharide lyase 8 family.

The protein resides in the secreted. Its subcellular location is the cell wall. Its function is as follows. Has a very modest degradation activity against heparin sodium salt (HS) in vitro. Involved in the pathogenesis of vancomycin-resistant E.faecalis infections. The protein is Polysaccharide lyase 8 family protein HylA of Enterococcus faecalis (strain ATCC 700802 / V583).